The sequence spans 438 residues: UDP-N-acetylmuramoylalanine--D-glutamate ligase (438 aa).

Position 112–118 (112–118 (GSNGKST)) interacts with ATP.

It belongs to the MurCDEF family.

The protein localises to the cytoplasm. It catalyses the reaction UDP-N-acetyl-alpha-D-muramoyl-L-alanine + D-glutamate + ATP = UDP-N-acetyl-alpha-D-muramoyl-L-alanyl-D-glutamate + ADP + phosphate + H(+). It participates in cell wall biogenesis; peptidoglycan biosynthesis. Its function is as follows. Cell wall formation. Catalyzes the addition of glutamate to the nucleotide precursor UDP-N-acetylmuramoyl-L-alanine (UMA). The protein is UDP-N-acetylmuramoylalanine--D-glutamate ligase of Escherichia coli O6:K15:H31 (strain 536 / UPEC).